Here is a 161-residue protein sequence, read N- to C-terminus: Transcription elongation factor GreA (161 aa).

This sequence belongs to the GreA/GreB family.

In terms of biological role, necessary for efficient RNA polymerase transcription elongation past template-encoded arresting sites. The arresting sites in DNA have the property of trapping a certain fraction of elongating RNA polymerases that pass through, resulting in locked ternary complexes. Cleavage of the nascent transcript by cleavage factors such as GreA or GreB allows the resumption of elongation from the new 3'terminus. GreA releases sequences of 2 to 3 nucleotides. The protein is Transcription elongation factor GreA of Desulfotalea psychrophila (strain LSv54 / DSM 12343).